A 158-amino-acid chain; its full sequence is Cyclic pyranopterin monophosphate synthase (158 aa).

Substrate is bound by residues 75 to 77 (LCH) and 113 to 114 (ME). Asp128 is a catalytic residue.

It belongs to the MoaC family. In terms of assembly, homohexamer; trimer of dimers.

The enzyme catalyses (8S)-3',8-cyclo-7,8-dihydroguanosine 5'-triphosphate = cyclic pyranopterin phosphate + diphosphate. It participates in cofactor biosynthesis; molybdopterin biosynthesis. Its function is as follows. Catalyzes the conversion of (8S)-3',8-cyclo-7,8-dihydroguanosine 5'-triphosphate to cyclic pyranopterin monophosphate (cPMP). The polypeptide is Cyclic pyranopterin monophosphate synthase (Acidiphilium cryptum (strain JF-5)).